We begin with the raw amino-acid sequence, 428 residues long: Glutamate-1-semialdehyde 2,1-aminomutase (428 aa).

Lys-265 is modified (N6-(pyridoxal phosphate)lysine).

It belongs to the class-III pyridoxal-phosphate-dependent aminotransferase family. HemL subfamily. As to quaternary structure, homodimer. Requires pyridoxal 5'-phosphate as cofactor.

It localises to the cytoplasm. The catalysed reaction is (S)-4-amino-5-oxopentanoate = 5-aminolevulinate. It participates in porphyrin-containing compound metabolism; protoporphyrin-IX biosynthesis; 5-aminolevulinate from L-glutamyl-tRNA(Glu): step 2/2. In Thioalkalivibrio sulfidiphilus (strain HL-EbGR7), this protein is Glutamate-1-semialdehyde 2,1-aminomutase.